A 615-amino-acid polypeptide reads, in one-letter code: Sodium-coupled neutral amino acid transporter 9 homolog (615 aa).

Residues 1–165 lie on the Cytoplasmic side of the membrane; sequence MPPFFAEFTE…LKDVSGKQGS (165 aa). Residues 41–65 form a disordered region; that stretch reads VDDNDTDPLLDDEPPRRLPPAGGVP. A compositionally biased stretch (acidic residues) spans 42-52; the sequence is DDNDTDPLLDD. The chain crosses the membrane as a helical span at residues 166–186; sequence IVTIFSIWNTMMGTSLLAMPW. An important for arginine binding and amino acid transport region spans residues 175–180; it reads TMMGTS. Residues 187–192 are Lumenal-facing; the sequence is ALQQAG. A helical membrane pass occupies residues 193–213; the sequence is LVLGIIIMLSMAAICFYTAYI. Residues 214–246 lie on the Cytoplasmic side of the membrane; sequence VIESPKRLQDLSVDPLLAEFSDVCKSLFGRIGE. Residues 247–273 traverse the membrane as a helical segment; sequence YCAVVFSVCVLIGGVIVYWVLMSNFLY. Topologically, residues 274–341 are lumenal; sequence YTGAVVYESM…TGDDSWSFDK (68 aa). N-linked (GlcNAc...) asparagine glycosylation is found at Asn-286 and Asn-295. Cys-304 and Cys-478 form a disulfide bridge. The helical transmembrane segment at 342 to 358 threads the bilayer; it reads FWTLRGTVPIYLAFALF. Over 359-367 the chain is Cytoplasmic; the sequence is PLMNFKSPT. The helical transmembrane segment at 368–392 threads the bilayer; it reads FFTKFNVLGTISVMYLLMFVFSKLL. Topologically, residues 393–413 are lumenal; it reads ECGVNMDFSNPKSIHYVQLAN. The helical transmembrane segment at 414-434 threads the bilayer; the sequence is MHFPALSGTLTLSYFIHNAVL. Topologically, residues 435 to 451 are cytoplasmic; it reads TILRNQKHPENNARDLS. Residues 452-472 traverse the membrane as a helical segment; the sequence is IGYCLVAFCYVFIGFTFFAAF. The Lumenal portion of the chain corresponds to 473 to 491; the sequence is PVQRSCISDNFLNNFGAGD. The helical transmembrane segment at 492 to 512 threads the bilayer; sequence VLSSTARLFLLFQMITVLPLL. At 513–533 the chain is on the cytoplasmic side; it reads MFLVRSQLFYAIFGQTWPGAI. A helical transmembrane segment spans residues 534–554; sequence RVIILNVLLIAVAVGFATFYP. Residues 555-561 are Lumenal-facing; it reads NVGSILR. The helical transmembrane segment at 562–582 threads the bilayer; sequence YVGSISGLVYVFALPAMVYIK. Topologically, residues 583 to 594 are cytoplasmic; sequence QSEAAGTLTPMK. A helical transmembrane segment spans residues 595–615; it reads KYAHYGIIVIGVANLIAQFVI.

The protein belongs to the amino acid/polyamine transporter 2 family. SLC38A9 subfamily.

It localises to the lysosome membrane. Its subcellular location is the late endosome membrane. Amino acid transport is sodium-dependent. Transport of leucine, tyrosine and phenylalanine is increased by arginine binding. Its function is as follows. Lysosomal amino acid transporter involved in the activation of mTORC1 in response to amino acid levels. Probably acts as an amino acid sensor of the Rag GTPases and Ragulator complexes, 2 complexes involved in amino acid sensing and activation of mTORC1, a signaling complex promoting cell growth in response to growth factors, energy levels, and amino acids. In Caenorhabditis elegans, this protein is Sodium-coupled neutral amino acid transporter 9 homolog.